The sequence spans 331 residues: Phosphoribosylformylglycinamidine cyclo-ligase (331 aa).

The protein belongs to the AIR synthase family.

It is found in the cytoplasm. It catalyses the reaction 2-formamido-N(1)-(5-O-phospho-beta-D-ribosyl)acetamidine + ATP = 5-amino-1-(5-phospho-beta-D-ribosyl)imidazole + ADP + phosphate + H(+). It participates in purine metabolism; IMP biosynthesis via de novo pathway; 5-amino-1-(5-phospho-D-ribosyl)imidazole from N(2)-formyl-N(1)-(5-phospho-D-ribosyl)glycinamide: step 2/2. The protein is Phosphoribosylformylglycinamidine cyclo-ligase of Clostridium tetani (strain Massachusetts / E88).